A 496-amino-acid chain; its full sequence is Hemophilin secretion modulator (496 aa).

A signal peptide spans 1-19 (MKRTLLCCLTLLSCPFLYA). A run of 14 beta stranded transmembrane segments spans residues 198–208 (WQGSVSAGYTY), 253–263 (DYEASLIKRYA), 268–277 (HGVALRALAF), 291–301 (TININAGYSYF), 305–315 (NQIGVSPLFEH), 327–337 (WGARAEWMHFI), 341–351 (KAFKLEAESKD), 365–374 (SSAFATFWKI), 380–389 (TFFGGLDVLD), 403–413 (QGVRLGLSKSW), 418–427 (NTTLLSSYRW), 446–455 (QNHTFVVQMP), 462–472 (MTPNLTYRYNH), and 486–495 (HNISFKLEHR).

It belongs to the Slam family.

It is found in the cell outer membrane. In terms of biological role, part of a high affinity heme acquisition system. Mediates the secretion of the hemophilin HphA across the outer membrane into the extracellular environment. Plays a supporting role for full virulence. This Acinetobacter baumannii protein is Hemophilin secretion modulator.